The primary structure comprises 636 residues: DNA primase (636 aa).

A CHC2-type zinc finger spans residues Cys-44–Cys-68. Residues His-266–Ala-352 enclose the Toprim domain. Glu-272, Asp-323, and Asp-325 together coordinate Mg(2+). A compositionally biased stretch (basic and acidic residues) spans Arg-443–Gln-459. The segment at Arg-443 to Trp-481 is disordered.

It belongs to the DnaG primase family. Monomer. Interacts with DnaB. Zn(2+) is required as a cofactor. The cofactor is Mg(2+).

It carries out the reaction ssDNA + n NTP = ssDNA/pppN(pN)n-1 hybrid + (n-1) diphosphate.. In terms of biological role, RNA polymerase that catalyzes the synthesis of short RNA molecules used as primers for DNA polymerase during DNA replication. This chain is DNA primase, found in Mycolicibacterium smegmatis (strain ATCC 700084 / mc(2)155) (Mycobacterium smegmatis).